The chain runs to 3256 residues: Proliferation marker protein Ki-67 (3256 aa).

The FHA domain occupies 27-76; sequence CLFGRGIECDIRIQLPVVSKQHCKIEIHEQEAILHNFSSTNPTQVNGSVI. A disordered region spans residues 101-199; it reads SLQNGRKSTE…RNGRNAADPI (99 aa). Residues 107–122 show a composition bias toward basic and acidic residues; it reads KSTEFPRKIREQEPAR. Phosphoserine occurs at positions 125, 128, and 166. Residues 161-173 are compositionally biased toward basic and acidic residues; that stretch reads NVKEDSTADDSKD. Residues 174-183 are compositionally biased toward polar residues; sequence SVAQGTTNVH. Lys-245 participates in a covalent cross-link: Glycyl lysine isopeptide (Lys-Gly) (interchain with G-Cter in SUMO2). Residues Ser-264, Ser-296, and Ser-308 each carry the phosphoserine modification. Disordered stretches follow at residues 271-426 and 513-542; these read ATEK…RGSI and RPELFDENLPPNTPLKRGEAPTKRKSLVMH. Over residues 314–324 the composition is skewed to basic and acidic residues; the sequence is DQNKGKGRDVE. A phosphothreonine mark is found at Thr-328 and Thr-347. Positions 349-358 are enriched in polar residues; it reads VQYSQQQNSP. A phosphoserine mark is found at Ser-352, Ser-357, and Ser-374. Thr-401 carries the post-translational modification Phosphothreonine. Ser-411 carries the phosphoserine modification. Residues 414 to 425 are compositionally biased toward polar residues; the sequence is KPENLSSKTRGS. Residues 495 to 678 form a positively charged patch (CP) region; it reads ESEGIPLKRR…AKQTQTKVIK (184 aa). The PP1-binding domain maps to 502–549; that stretch reads KRRRVSFGGHLRPELFDENLPPNTPLKRGEAPTKRKSLVMHTPPVLKK. At Ser-538 the chain carries Phosphoserine. Thr-543 carries the phosphothreonine modification. A disordered region spans residues 575–632; that stretch reads SLVISPPAPSPRKTPVASDQRRRSCKTAPASSSKSQTEVPKRGGRKSGNLPSKRVSIS. Residues Ser-579 and Ser-584 each carry the phosphoserine modification. The span at 603–612 shows a compositional bias: polar residues; the sequence is PASSSKSQTE. Ser-648 is subject to Phosphoserine. The disordered stretch occupies residues 674–707; sequence TKVIKHGPQRSMNKRQRRPATPKKPVGEVHSQFS. The span at 676–694 shows a compositional bias: basic residues; the sequence is VIKHGPQRSMNKRQRRPAT. Position 761 is a phosphothreonine (Thr-761). A disordered region spans residues 853 to 886; sequence SLETKTSDTETEPSKTVSTANRSGRSTEFRNIQK. The residue at position 859 (Ser-859) is a Phosphoserine. A compositionally biased stretch (polar residues) spans 866 to 882; it reads SKTVSTANRSGRSTEFR. The tract at residues 1000-2928 is 16 X 122 AA approximate repeats; the sequence is GKITKMPCQS…ASFQELSQTP (1929 aa). K167R repeat units follow at residues 1001-1112, 1123-1234, 1245-1356, 1367-1477, 1488-1597, and 1609-1720; these read KITK…FQTP, KTTK…FQTP, KTTK…LFQT, and KTAK…FQTP. Thr-1017 carries the post-translational modification Phosphothreonine. Glycyl lysine isopeptide (Lys-Gly) (interchain with G-Cter in SUMO2) cross-links involve residues Lys-1022 and Lys-1035. Residues 1045–1073 form a disordered region; that stretch reads TRTSGETTHTHREPAGDGKSIRTFKESPK. Positions 1052–1072 are enriched in basic and acidic residues; it reads THTHREPAGDGKSIRTFKESP. Ser-1071 is modified (phosphoserine). A Phosphothreonine modification is found at Thr-1091. Lys-1093 participates in a covalent cross-link: Glycyl lysine isopeptide (Lys-Gly) (interchain with G-Cter in SUMO1); alternate. Lys-1093 is covalently cross-linked (Glycyl lysine isopeptide (Lys-Gly) (interchain with G-Cter in SUMO2); alternate). Position 1098 is a phosphoserine (Ser-1098). A disordered region spans residues 1109-1151; that stretch reads FQTPGPSEESMTDEKTTKIACKSPPPESVDTPTSTKQWPKRSL. A Phosphothreonine modification is found at Thr-1111. Ser-1131 is modified (phosphoserine). Thr-1139 is subject to Phosphothreonine. Position 1142 is a phosphoserine (Ser-1142). The residue at position 1167 (Thr-1167) is a Phosphothreonine. Ser-1169 carries the post-translational modification Phosphoserine. Thr-1176 is subject to Phosphothreonine. Glycyl lysine isopeptide (Lys-Gly) (interchain with G-Cter in SUMO2) cross-links involve residues Lys-1185 and Lys-1188. At Thr-1193 the chain carries Phosphothreonine. At Ser-1207 the chain carries Phosphoserine. A Phosphothreonine modification is found at Thr-1233. The interval 1246-1276 is disordered; it reads TTKIPCDSPQSDPVDTPTSTKQRPKRSIRKA. Ser-1253 and Ser-1256 each carry phosphoserine. A compositionally biased stretch (polar residues) spans 1253-1266; that stretch reads SPQSDPVDTPTSTK. Phosphothreonine occurs at positions 1261, 1298, 1315, and 1327. Positions 1323 to 1518 are disordered; that stretch reads TENLTGSKRR…PQSKRSLRKV (196 aa). Ser-1329 carries the phosphoserine modification. Residue Thr-1335 is modified to Phosphothreonine. Residue Lys-1337 forms a Glycyl lysine isopeptide (Lys-Gly) (interchain with G-Cter in SUMO2) linkage. Residue Thr-1355 is modified to Phosphothreonine. Ser-1376 carries the phosphoserine modification. A Phosphothreonine modification is found at Thr-1383. Ser-1386 is subject to Phosphoserine. Composition is skewed to basic and acidic residues over residues 1394 to 1406 and 1418 to 1442; these read PLEKRDVQKELSA and THTDKVPGGEDKSINAFRETAKQKL. Thr-1420 and Thr-1437 each carry phosphothreonine. Ser-1496 carries the post-translational modification Phosphoserine. Thr-1503 is subject to Phosphothreonine. Ser-1506 is subject to Phosphoserine. Position 1540 is a phosphothreonine (Thr-1540). Phosphotyrosine is present on Tyr-1552. Residues Thr-1557 and Thr-1569 each carry the phosphothreonine modification. Phosphoserine occurs at positions 1571 and 1617. Residues 1597-1675 are disordered; sequence TRGHTEESMT…PTGDGKSMKA (79 aa). Position 1639 is an N6-acetyllysine (Lys-1639). Lys-1643 is covalently cross-linked (Glycyl lysine isopeptide (Lys-Gly) (interchain with G-Cter in SUMO2)). A compositionally biased stretch (basic and acidic residues) spans 1660-1672; sequence THTHTEPTGDGKS. A phosphoserine mark is found at Ser-1679 and Ser-1689. Disordered stretches follow at residues 1689-1708, 1717-1765, 1771-1790, 1801-1824, and 1839-1886; these read SLTGSKRQLRTPKGKSEVPE, FQTP…ADTE, FRKQTPSAGKAMHTPKPAVG, TPVQKLDQPGNLPGSNRRLQTRKE, and FQTP…KADV. Lys-1703 is covalently cross-linked (Glycyl lysine isopeptide (Lys-Gly) (interchain with G-Cter in SUMO2)). Thr-1719 is modified (phosphothreonine). Residue Ser-1721 is modified to Phosphoserine. Positions 1722–1733 are enriched in basic and acidic residues; it reads HTKESMTNEKTT. K167R repeat units lie at residues 1731 to 1842, 1854 to 1964, 1975 to 2086, 2097 to 2204, and 2215 to 2326; these read KTTK…FQTP, TKKI…FQTP, and KITE…FQTP. Ser-1740 carries the post-translational modification Phosphoserine. Phosphothreonine is present on residues Thr-1747, Thr-1764, Thr-1784, and Thr-1801. Ser-1815 bears the Phosphoserine mark. A Phosphothreonine modification is found at Thr-1841. A phosphoserine mark is found at Ser-1861 and Ser-1864. Positions 1861–1874 are enriched in polar residues; sequence SPQSDPADTPTNTK. A phosphothreonine mark is found at Thr-1869, Thr-1897, Thr-1906, and Thr-1923. Ser-1937 is modified (phosphoserine). A disordered region spans residues 1961–2002; sequence FQTPGHTEESMTDDKITEVSCKSPQPDPVKTPTSSKQRLKIS. Position 1963 is a phosphothreonine (Thr-1963). The segment covering 1966 to 1977 has biased composition (basic and acidic residues); the sequence is HTEESMTDDKIT. Phosphoserine is present on Ser-1983. Lys-2005 carries the N6-acetyllysine modification. A Glycyl lysine isopeptide (Lys-Gly) (interchain with G-Cter in SUMO1); alternate cross-link involves residue Lys-2009. Residue Lys-2009 forms a Glycyl lysine isopeptide (Lys-Gly) (interchain with G-Cter in SUMO2); alternate linkage. Residues 2017–2192 are disordered; it reads KLTQTSGKTT…TPKGKAQPLE (176 aa). 2 positions are modified to phosphothreonine: Thr-2028 and Thr-2065. Composition is skewed to basic and acidic residues over residues 2028-2046 and 2061-2070; these read THRETAGDGKSIKAFKESA and RWPRTPKEEA. Residue Lys-2067 forms a Glycyl lysine isopeptide (Lys-Gly) (interchain with G-Cter in SUMO1); alternate linkage. Lys-2067 is covalently cross-linked (Glycyl lysine isopeptide (Lys-Gly) (interchain with G-Cter in SUMO2); alternate). Ser-2072 carries the post-translational modification Phosphoserine. Phosphothreonine is present on Thr-2085. Residues 2087 to 2099 are compositionally biased toward basic and acidic residues; it reads DHTEESTTDDKTT. Phosphoserine is present on Ser-2105. At Thr-2113 the chain carries Phosphothreonine. Phosphoserine is present on residues Ser-2116 and Ser-2135. Residues 2145 to 2168 are compositionally biased toward basic and acidic residues; it reads HTDKVPGDEDKGINVFRETAKQKL. A phosphothreonine mark is found at Thr-2146, Thr-2163, and Thr-2203. The segment at 2205–2400 is disordered; the sequence is ICTDKPTTHE…KPAVSDEKNI (196 aa). Ser-2223 carries the post-translational modification Phosphoserine. Phosphothreonine is present on residues Thr-2231 and Thr-2233. Ser-2239 is subject to Phosphoserine. The residue at position 2259 (Thr-2259) is a Phosphothreonine. Ser-2261 carries the phosphoserine modification. Phosphothreonine occurs at positions 2268, 2285, 2325, 2328, and 2333. K167R repeat units lie at residues 2336-2447, 2458-2569, 2580-2688, 2700-2805, and 2819-2928; these read KTTK…FQTP, KITE…FSAP, KNTK…LSET, KATK…GFKD, and KTTK…SQTP. At Ser-2344 the chain carries Phosphoserine. Residues Thr-2352 and Thr-2389 each carry the phosphothreonine modification. Phosphoserine is present on Ser-2395. Thr-2406 is subject to Phosphothreonine. Ser-2420 is modified (phosphoserine). 2 positions are modified to phosphothreonine: Thr-2426 and Thr-2446. The interval 2445 to 2480 is disordered; the sequence is QTPGHTEESMTDDKITEVSCKSPQPESFKTSRSSKQ. Residues 2449–2460 are compositionally biased toward basic and acidic residues; sequence HTEESMTDDKIT. Polar residues predominate over residues 2463–2475; sequence SCKSPQPESFKTS. Ser-2466 carries the phosphoserine modification. A Glycyl lysine isopeptide (Lys-Gly) (interchain with G-Cter in SUMO1) cross-link involves residue Lys-2492. Residues 2497–2521 are disordered; it reads AVSKLTRTSGETTQTHTEPTGDSKS. Polar residues predominate over residues 2501-2514; that stretch reads LTRTSGETTQTHTE. 3 positions are modified to phosphoserine: Ser-2505, Ser-2528, and Ser-2588. The tract at residues 2570 to 3256 is disordered; it reads GHTEESMTID…TRSHRDSEDI (687 aa). 3 stretches are compositionally biased toward basic and acidic residues: residues 2609–2618, 2632–2644, and 2660–2675; these read RKEVKEELSA, THKEPASGDEGIK, and EPSRRRPRAPKEKAQP. Lys-2613 is covalently cross-linked (Glycyl lysine isopeptide (Lys-Gly) (interchain with G-Cter in SUMO1); alternate). Residue Lys-2613 forms a Glycyl lysine isopeptide (Lys-Gly) (interchain with G-Cter in SUMO2); alternate linkage. Ser-2638 bears the Phosphoserine mark. Residues 2685 to 2696 are compositionally biased toward polar residues; it reads LSETSGHTQESL. Position 2708 is a phosphoserine (Ser-2708). Lys-2734 participates in a covalent cross-link: Glycyl lysine isopeptide (Lys-Gly) (interchain with G-Cter in SUMO1); alternate. Residue Lys-2734 forms a Glycyl lysine isopeptide (Lys-Gly) (interchain with G-Cter in SUMO2); alternate linkage. Composition is skewed to basic and acidic residues over residues 2751 to 2770 and 2810 to 2821; these read DADKEPAGEDKGIKALKESA and HTEESMTDDKTT. A phosphoserine mark is found at Ser-2827, Ser-2828, and Ser-2838. A Glycyl lysine isopeptide (Lys-Gly) (interchain with G-Cter in SUMO1); alternate cross-link involves residue Lys-2852. Lys-2852 participates in a covalent cross-link: Glycyl lysine isopeptide (Lys-Gly) (interchain with G-Cter in SUMO2); alternate. A compositionally biased stretch (basic and acidic residues) spans 2869 to 2881; it reads THTDKEPVGEGKG. Positions 2941–2951 are enriched in polar residues; that stretch reads SFTSAPKQTPD. Residue Lys-2967 forms a Glycyl lysine isopeptide (Lys-Gly) (interchain with G-Cter in SUMO2) linkage. Polar residues predominate over residues 2982–2991; it reads KSQSKSNTSL. Lys-2986 bears the N6-acetyllysine mark. Basic residues predominate over residues 3029 to 3039; sequence KKQRVAPRARG. Residue 3034 to 3041 coordinates ATP; that stretch reads APRARGKS. Ser-3041 bears the Phosphoserine mark. Basic and acidic residues-rich tracts occupy residues 3071-3080 and 3113-3124; these read KTNKEEHKLQ and ERIEINRNEKKP. Ser-3128 is subject to Phosphoserine. Over residues 3138-3154 the composition is skewed to basic and acidic residues; sequence DGARKPIPRDKVTENKR. The span at 3207–3223 shows a compositional bias: polar residues; sequence SQPAASTLESKSVQRVT. Basic and acidic residues predominate over residues 3228–3241; that stretch reads RCAENPKKAEDNVC.

In terms of assembly, interacts with KIF15. Interacts (via the FHA domain) with NIFK. Interacts with PPP1CC. Component of a complex at least composed of ZNF335, HCFC1, CCAR2, EMSY, MKI67, RBBP5, ASH2L and WDR5; the complex is formed as a result of interactions between components of a nuclear receptor-mediated transcription complex and a histone methylation complex. Interacts with ZNF335. Hyperphosphorylated by CDK1 in mitosis; hyperphosphorylatiom prevents undergoing liquid-liquid phase separation. Dephosphorylated by PPP1CC at the onset of anaphase. Dephosphorylated by protein phosphatase 2A (PP2A) at the onset of anaphase. Dephosphorylation by protein phosphatase 2A (PP2A) and simultaneous exposure of the positively charged patch (CP) during mitotic exit induce the RNA-dependent formation of a liquid-like condensed phase on the chromosome surface. Post-translationally, ubiquitinated by the APC/C complex after neuronal progenitors exit mitosis during brain development, leading to clearance from constitutive heterochromatin.

The protein localises to the chromosome. The protein resides in the nucleus. It is found in the nucleolus. Its function is as follows. Protein that associates with the surface of mitotic chromosomes and acts both as a chromosome repellent during early mitosis and chromosome attractant during late mitosis. Required to maintain individual mitotic chromosomes dispersed in the cytoplasm following nuclear envelope disassembly. During early mitosis, relocalizes from nucleoli to the chromosome surface where it forms extended brush structures that cover a substantial fraction of the chromosome surface. The MKI67 brush structure prevents chromosomes from collapsing into a single chromatin mass by forming a steric and electrostatic charge barrier: the protein has a high net electrical charge and acts as a surfactant, dispersing chromosomes and enabling independent chromosome motility. During mitotic anaphase, the MKI67 brush structure collapses and MKI67 switches from a chromosome repellent to a chromosome attractant to promote chromosome clustering and facilitate the exclusion of large cytoplasmic particles from the future nuclear space. Mechanistically, dephosphorylation during mitotic exit and simultaneous exposure of a conserved basic patch induce the RNA-dependent formation of a liquid-like condensed phase on the chromosome surface, promoting coalescence of neighboring chromosome surfaces and clustering of chromosomes. Binds premature ribosomal RNAs during anaphase; promoting liquid-liquid phase separation. Binds DNA, with a preference for supercoiled DNA and AT-rich DNA. Does not contribute to the internal structure of mitotic chromosomes. May play a role in chromatin organization; it is however unclear whether it plays a direct role in chromatin organization or whether it is an indirect consequence of its function in mitotic chromosome. The protein is Proliferation marker protein Ki-67 of Homo sapiens (Human).